A 386-amino-acid chain; its full sequence is Vesicle-associated protein 2-2 (386 aa).

An N-acetylmethionine modification is found at Met1. At 1 to 363 (MNMPLLDIQP…TKKIVKEVHN (363 aa)) the chain is on the cytoplasmic side. The MSP domain maps to 5–125 (LLDIQPRTLQ…EENKLRVTLV (121 aa)). Ser279 carries the phosphoserine modification. A coiled-coil region spans residues 300 to 353 (ELKLVKDIEEMKLKVDALESKLKQADSTISKLMEERSISSQHRQSLQHELAELR). The helical; Anchor for type IV membrane protein transmembrane segment at 364–384 (GFPLLYVCVVAFIAYVIGHFL) threads the bilayer.

Belongs to the VAMP-associated protein (VAP) (TC 9.B.17) family. Interacts with cowpea mosaic virus (CPMV) NTP-binding protein (NTB).

The protein localises to the endoplasmic reticulum membrane. May play a role in vesicle trafficking. In Arabidopsis thaliana (Mouse-ear cress), this protein is Vesicle-associated protein 2-2 (PVA22).